A 434-amino-acid polypeptide reads, in one-letter code: Alpha-enolase (434 aa).

Mg(2+) is bound at residue serine 40. Residues histidine 158 and glutamate 167 each contribute to the substrate site. Residue glutamate 210 is the Proton donor of the active site. Residues aspartate 245, glutamate 293, and aspartate 318 each coordinate Mg(2+). Residues glutamate 293 and aspartate 318 each contribute to the substrate site. The active-site Proton acceptor is lysine 343. Residues 370 to 373 (SHRS) and lysine 394 each bind substrate.

The protein belongs to the enolase family. In terms of assembly, homodimer. The cofactor is Mg(2+).

The protein localises to the cytoplasm. It carries out the reaction (2R)-2-phosphoglycerate = phosphoenolpyruvate + H2O. The protein operates within carbohydrate degradation; glycolysis; pyruvate from D-glyceraldehyde 3-phosphate: step 4/5. Functionally, both an enzyme and a lens structural protein. In Anas platyrhynchos (Mallard), this protein is Alpha-enolase (ENO1).